The sequence spans 453 residues: Serine incorporator 1 (453 aa).

Glycine 2 carries N-myristoyl glycine lipidation. Over 2 to 39 (GSVLGLCSMASWIPCLCGSAPCLLCRCCPSGNNSTVTR) the chain is Cytoplasmic. A helical transmembrane segment spans residues 40–60 (LIYALFLLVGVCVACVMLIPG). Over 61-88 (MEEQLNKIPGFCENEKGVVPCNILVGYK) the chain is Lumenal. The chain crosses the membrane as a helical span at residues 89-109 (AVYRLCFGLAMFYLLLSLLMI). The Cytoplasmic segment spans residues 110–123 (KVKSSSDPRAAVHN). Residues 124–144 (GFWFFKFAAAIAIIIGAFFIP) form a helical membrane-spanning segment. Topologically, residues 145 to 151 (EGTFTTV) are lumenal. A helical transmembrane segment spans residues 152-172 (WFYVGMAGAFCFILIQLVLLI). Over 173–197 (DFAHSWNESWVEKMEEGNSRCWYAA) the chain is Cytoplasmic. Residues 198 to 218 (LLSATALNYLLSLVAIVLFFV) traverse the membrane as a helical segment. Topologically, residues 219 to 231 (YYTHPASCSENKA) are lumenal. Residues 232–252 (FISVNMLLCIGASVMSILPKI) traverse the membrane as a helical segment. Residues 253–259 (QESQPRS) lie on the Cytoplasmic side of the membrane. The helical transmembrane segment at 260-280 (GLLQSSVITVYTMYLTWSAMT) threads the bilayer. Residues 281 to 309 (NEPETNCNPSLLSIIGYNTTSTVPKEGQS) lie on the Lumenal side of the membrane. Residues 310–330 (VQWWHAQGIIGLILFLLCVFY) traverse the membrane as a helical segment. At 331–387 (SSIRTSNNSQVNKLTLTSDESTLIEDGGARSDGSLEDGDDVHRAVDNERDGVTYSYS) the chain is on the cytoplasmic side. Serine 351 is modified (phosphoserine). At threonine 352 the chain carries Phosphothreonine. Residues serine 361 and serine 364 each carry the phosphoserine modification. The chain crosses the membrane as a helical span at residues 388-408 (FFHFMLFLASLYIMMTLTNWY). The Lumenal segment spans residues 409–426 (RYEPSREMKSQWTAVWVK). The helical transmembrane segment at 427-447 (ISSSWIGIVLYVWTLVAPLVL) threads the bilayer. Residues 448 to 453 (TNRDFD) are Cytoplasmic-facing.

Belongs to the TDE1 family. As to quaternary structure, interacts with SPTLC1.

It is found in the endoplasmic reticulum membrane. In terms of biological role, enhances the incorporation of serine into phosphatidylserine and sphingolipids. The protein is Serine incorporator 1 (SERINC1) of Pongo abelii (Sumatran orangutan).